A 181-amino-acid polypeptide reads, in one-letter code: Translationally-controlled tumor protein homolog (181 aa).

The 181-residue stretch at 1–181 (MLIYKDIFTD…VKEAIIEEKC (181 aa)) folds into the TCTP domain.

This sequence belongs to the TCTP family.

Its subcellular location is the cytoplasm. Its function is as follows. Involved in calcium binding and microtubule stabilization. The polypeptide is Translationally-controlled tumor protein homolog (tct-1) (Caenorhabditis elegans).